A 242-amino-acid chain; its full sequence is Venom nerve growth factor 1 (242 aa).

A signal peptide spans 1 to 18 (MSMLCYTLIIAFLIGIWA). The propeptide occupies 19–125 (APKSEDNVPL…ALNRNIRSKR (107 aa)). The interval 26 to 69 (VPLGSPATSDLSDTSCAQTHKALKTSRNTDQRHPAPKKAEDQEL) is disordered. A compositionally biased stretch (polar residues) spans 31-43 (PATSDLSDTSCAQ). Basic and acidic residues predominate over residues 52-66 (RNTDQRHPAPKKAED). Disulfide bonds link C139–C203, C181–C231, and C191–C233. An N-linked (GlcNAc...) asparagine glycan is attached at N147.

The protein belongs to the NGF-beta family. Homodimer; non-covalently linked. Expressed by the venom gland.

The protein resides in the secreted. Functionally, nerve growth factor is important for the development and maintenance of the sympathetic and sensory nervous systems. It stimulates division and differentiation of sympathetic and embryonic sensory neurons as well as basal forebrain cholinergic neurons in the brain. Its relevance in the snake venom is not clear. However, it has been shown to inhibit metalloproteinase-dependent proteolysis of platelet glycoprotein Ib alpha, suggesting a metalloproteinase inhibition to prevent metalloprotease autodigestion and/or protection against prey proteases. Binds a lipid between the two protein chains in the homodimer. The lipid-bound form promotes histamine relase from mouse mast cells, contrary to the lipid-free form. The protein is Venom nerve growth factor 1 of Demansia vestigiata (Lesser black whip snake).